A 150-amino-acid polypeptide reads, in one-letter code: Macrodomain Ter protein (150 aa).

Belongs to the MatP family. In terms of assembly, homodimer.

It localises to the cytoplasm. Its function is as follows. Required for spatial organization of the terminus region of the chromosome (Ter macrodomain) during the cell cycle. Prevents early segregation of duplicated Ter macrodomains during cell division. Binds specifically to matS, which is a 13 bp signature motif repeated within the Ter macrodomain. The chain is Macrodomain Ter protein from Salmonella arizonae (strain ATCC BAA-731 / CDC346-86 / RSK2980).